A 217-amino-acid chain; its full sequence is MGQKVHPIGMRVGIIRDWDAKWYAEKEYADYLHEDLAIRKFVQKELADAAISTIEIERAVNKVNVSLHTAKPGMVIGKGGANVDALRAKLNKLTGKQVHINIIEIKRPDLDAHLVGEGIARQLEQRVAFRRAQKQAIQRTMRAGAKGIKTQVSGRLNGADIARSEGYSEGTVPLHTLRADIDYAWEEADTTYGKLGVKVWIYRGEVLPARKNTKGGK.

The KH type-2 domain occupies 38-106; that stretch reads IRKFVQKELA…QVHINIIEIK (69 aa).

Belongs to the universal ribosomal protein uS3 family. In terms of assembly, part of the 30S ribosomal subunit. Forms a tight complex with proteins S10 and S14.

Its function is as follows. Binds the lower part of the 30S subunit head. Binds mRNA in the 70S ribosome, positioning it for translation. This is Small ribosomal subunit protein uS3 from Streptococcus sanguinis (strain SK36).